The primary structure comprises 202 residues: LexA repressor 2 (202 aa).

Residues 28 to 48 (LAEISEAFGFASRSVARKHIV) constitute a DNA-binding region (H-T-H motif). Residues S123 and K160 each act as for autocatalytic cleavage activity in the active site.

This sequence belongs to the peptidase S24 family. In terms of assembly, homodimer.

The enzyme catalyses Hydrolysis of Ala-|-Gly bond in repressor LexA.. In terms of biological role, represses a number of genes involved in the response to DNA damage (SOS response), including recA and lexA. In the presence of single-stranded DNA, RecA interacts with LexA causing an autocatalytic cleavage which disrupts the DNA-binding part of LexA, leading to derepression of the SOS regulon and eventually DNA repair. This Pseudomonas syringae pv. tomato (strain ATCC BAA-871 / DC3000) protein is LexA repressor 2.